Here is a 392-residue protein sequence, read N- to C-terminus: Formate-dependent phosphoribosylglycinamide formyltransferase (392 aa).

N(1)-(5-phospho-beta-D-ribosyl)glycinamide is bound by residues 12–13 (EL) and Glu-72. ATP contacts are provided by residues Arg-104, Lys-145, 150–155 (SSGKGQ), 185–188 (EAFV), and Glu-193. The 192-residue stretch at 109–300 (DLAARDLGLR…EFELHARAVL (192 aa)) folds into the ATP-grasp domain. Mg(2+) contacts are provided by Glu-258 and Glu-270. N(1)-(5-phospho-beta-D-ribosyl)glycinamide-binding positions include Asp-277, Lys-348, and 355–356 (RR).

This sequence belongs to the PurK/PurT family. As to quaternary structure, homodimer.

The enzyme catalyses N(1)-(5-phospho-beta-D-ribosyl)glycinamide + formate + ATP = N(2)-formyl-N(1)-(5-phospho-beta-D-ribosyl)glycinamide + ADP + phosphate + H(+). It participates in purine metabolism; IMP biosynthesis via de novo pathway; N(2)-formyl-N(1)-(5-phospho-D-ribosyl)glycinamide from N(1)-(5-phospho-D-ribosyl)glycinamide (formate route): step 1/1. In terms of biological role, involved in the de novo purine biosynthesis. Catalyzes the transfer of formate to 5-phospho-ribosyl-glycinamide (GAR), producing 5-phospho-ribosyl-N-formylglycinamide (FGAR). Formate is provided by PurU via hydrolysis of 10-formyl-tetrahydrofolate. The sequence is that of Formate-dependent phosphoribosylglycinamide formyltransferase from Chlorobaculum tepidum (strain ATCC 49652 / DSM 12025 / NBRC 103806 / TLS) (Chlorobium tepidum).